Here is a 316-residue protein sequence, read N- to C-terminus: Ribosomal protein L11 methyltransferase (316 aa).

Residues Thr157, Gly178, Asp200, and Asn243 each coordinate S-adenosyl-L-methionine.

The protein belongs to the methyltransferase superfamily. PrmA family.

It localises to the cytoplasm. The enzyme catalyses L-lysyl-[protein] + 3 S-adenosyl-L-methionine = N(6),N(6),N(6)-trimethyl-L-lysyl-[protein] + 3 S-adenosyl-L-homocysteine + 3 H(+). In terms of biological role, methylates ribosomal protein L11. The polypeptide is Ribosomal protein L11 methyltransferase (Streptococcus pneumoniae (strain 70585)).